A 204-amino-acid polypeptide reads, in one-letter code: Holliday junction branch migration complex subunit RuvA (204 aa).

A domain I region spans residues 1-64; it reads MIGKLKGTID…EDQLKLFGFM (64 aa). A domain II region spans residues 65–143; that stretch reads TALEREWFNL…AFAGEAINIA (79 aa). Residues 144 to 151 form a flexible linker region; that stretch reads LKQELGEG. The segment at 152 to 204 is domain III; it reads VAAAPVADAVSALTNLGYSRDQAANAVAAAMKTAGDGADSAKLIRLGLKELAR.

The protein belongs to the RuvA family. As to quaternary structure, homotetramer. Forms an RuvA(8)-RuvB(12)-Holliday junction (HJ) complex. HJ DNA is sandwiched between 2 RuvA tetramers; dsDNA enters through RuvA and exits via RuvB. An RuvB hexamer assembles on each DNA strand where it exits the tetramer. Each RuvB hexamer is contacted by two RuvA subunits (via domain III) on 2 adjacent RuvB subunits; this complex drives branch migration. In the full resolvosome a probable DNA-RuvA(4)-RuvB(12)-RuvC(2) complex forms which resolves the HJ.

The protein localises to the cytoplasm. The RuvA-RuvB-RuvC complex processes Holliday junction (HJ) DNA during genetic recombination and DNA repair, while the RuvA-RuvB complex plays an important role in the rescue of blocked DNA replication forks via replication fork reversal (RFR). RuvA specifically binds to HJ cruciform DNA, conferring on it an open structure. The RuvB hexamer acts as an ATP-dependent pump, pulling dsDNA into and through the RuvAB complex. HJ branch migration allows RuvC to scan DNA until it finds its consensus sequence, where it cleaves and resolves the cruciform DNA. In Rhizobium etli (strain CIAT 652), this protein is Holliday junction branch migration complex subunit RuvA.